A 116-amino-acid polypeptide reads, in one-letter code: Endocuticle structural glycoprotein ABD-4 (116 aa).

Residue Q1 is modified to Pyrrolidone carboxylic acid. The 73-residue stretch at 20–92 (DGSYQWNYET…PQGAHFPTPP (73 aa)) folds into the Chitin-binding type R&amp;R domain. Positions 78-97 (ENGFVPQGAHFPTPPPIPPA) are disordered. O-linked (GalNAc) threonine; in ADB-4A, ABD-4B and ABD-4C glycosylation occurs at T90. An O-linked (GalNAc) threonine; in ADB-4A and ABD-4B glycan is attached at T107. A glycan (O-linked (GalNAc) threonine; in ADB-4A) is linked at T111. The residue at position 116 (P116) is a Proline amide.

3 variants exists that arise from a sequential glycosylation with N-acetylgalactosamine at three (ABD-4A), two (ABD-4B) or one (ABD-4C) threonine residues.

Component of the soft endocuticle of migratory locust. This chain is Endocuticle structural glycoprotein ABD-4, found in Locusta migratoria (Migratory locust).